Reading from the N-terminus, the 484-residue chain is Ankyrin repeat protein T5 (484 aa).

7 ANK repeats span residues 33–64, 68–102, 106–138, 142–173, 178–211, 251–280, and 284–313; these read MDDT…DVNG, TRTS…DVNA, DGRY…LVCV, DGCG…SIHD, YGFN…NSSQ, LDFT…NPNV, and LGNS…TPDA.

The protein is Ankyrin repeat protein T5 of Rabbit fibroma virus (strain Kasza) (RFV).